We begin with the raw amino-acid sequence, 159 residues long: Phosphopantetheine adenylyltransferase (159 aa).

Residue serine 9 coordinates substrate. Residues 9–10 and histidine 17 contribute to the ATP site; that span reads SF. 3 residues coordinate substrate: lysine 41, leucine 73, and lysine 87. ATP is bound by residues 88-90, glutamate 98, and 122-128; these read GLR and YSFLSSS.

This sequence belongs to the bacterial CoaD family. Homohexamer. Mg(2+) serves as cofactor.

The protein localises to the cytoplasm. It catalyses the reaction (R)-4'-phosphopantetheine + ATP + H(+) = 3'-dephospho-CoA + diphosphate. Its pathway is cofactor biosynthesis; coenzyme A biosynthesis; CoA from (R)-pantothenate: step 4/5. Its function is as follows. Reversibly transfers an adenylyl group from ATP to 4'-phosphopantetheine, yielding dephospho-CoA (dPCoA) and pyrophosphate. The sequence is that of Phosphopantetheine adenylyltransferase from Streptomyces coelicolor (strain ATCC BAA-471 / A3(2) / M145).